The sequence spans 328 residues: Palmitoyltransferase ZDHHC15A (328 aa).

Topologically, residues 1–14 are cytoplasmic; sequence MLLPACLRRCARLL. Residues 15–35 traverse the membrane as a helical segment; that stretch reads FWIPVLVVIVVVMWSYYAYVV. Residues 36 to 48 are Lumenal-facing; it reads HFCWILLSSATQR. The chain crosses the membrane as a helical span at residues 49–69; it reads VVFLCLFHLCFGMFSWSFWKA. The Cytoplasmic portion of the chain corresponds to 70–166; that stretch reads VSTPPSSPSV…NNCMGFSNYK (97 aa). In terms of domain architecture, DHHC spans 123 to 173; that stretch reads RFCHHCQLIKPDRCHHCSVCQTCVLKMDHHCLWLNNCMGFSNYKFFMLFLL. Residues Cys125 and Cys128 each contribute to the Zn(2+) site. Lys132 serves as a coordination point for substrate. Zn(2+) contacts are provided by His138, Cys139, Cys142, Cys145, and His152. Cys153 acts as the S-palmitoyl cysteine intermediate in catalysis. Cys159 is a binding site for Zn(2+). The chain crosses the membrane as a helical span at residues 167–187; that stretch reads FFMLFLLYSLLYCLLIVSTVT. Over 188–206 the chain is Lumenal; that stretch reads PTVIQLWRGRLFDSCVKLH. Residues 207-227 form a helical membrane-spanning segment; the sequence is VLFLTLVSAIFAITLCFLLIF. Topologically, residues 228–328 are cytoplasmic; the sequence is HIWLLTSNKT…KEAAVTIAVD (101 aa).

The protein belongs to the DHHC palmitoyltransferase family. Autopalmitoylated (in vitro).

The protein localises to the golgi apparatus membrane. Its subcellular location is the postsynaptic density. The catalysed reaction is L-cysteinyl-[protein] + hexadecanoyl-CoA = S-hexadecanoyl-L-cysteinyl-[protein] + CoA. It catalyses the reaction L-cysteinyl-[protein] + tetradecanoyl-CoA = S-tetradecanoyl-L-cysteinyl-[protein] + CoA. The enzyme catalyses L-cysteinyl-[protein] + octadecanoyl-CoA = S-octadecanoyl-L-cysteinyl-[protein] + CoA. Its function is as follows. Palmitoyltransferase that catalyzes the addition of palmitate onto various protein substrates. Has no stringent fatty acid selectivity and in addition to palmitate can also transfer onto target proteins myristate from tetradecanoyl-CoA and stearate from octadecanoyl-CoA. May thereby regulate target proteins association and localization to membranes. The protein is Palmitoyltransferase ZDHHC15A (zdhhc15a) of Danio rerio (Zebrafish).